The primary structure comprises 400 residues: CinA-like protein (400 aa).

This sequence belongs to the CinA family.

The polypeptide is CinA-like protein (Escherichia coli (strain SE11)).